A 409-amino-acid chain; its full sequence is Calsequestrin-2 (409 aa).

A signal peptide spans 1–19; that stretch reads MKRAHLFVVGVYLLSSCRA. Residue Tyr-282 is modified to Phosphotyrosine. N-linked (GlcNAc...) asparagine glycosylation is present at Asn-335. Residues 364 to 409 are disordered; it reads DVLSGKINTEDDDNEDEDDDDDNDDDDDDNGNSDEEDNDDSDEDDE. Residues 373–409 are compositionally biased toward acidic residues; it reads EDDDNEDEDDDDDNDDDDDDNGNSDEEDNDDSDEDDE.

This sequence belongs to the calsequestrin family. In terms of assembly, monomer, homodimer and homooligomer. Mostly monomeric in the absence of calcium. Forms higher oligomers in a calcium-dependent manner. Dimers associate to form tetramers, that then form linear homomer chains. Interacts with ASPH and TRDN. In terms of processing, phosphorylation in the C-terminus, probably by CK2, moderately increases calcium buffering capacity. N-glycosylated. As to expression, detected in heart muscle (at protein level).

The protein resides in the sarcoplasmic reticulum lumen. In terms of biological role, calsequestrin is a high-capacity, moderate affinity, calcium-binding protein and thus acts as an internal calcium store in muscle. Calcium ions are bound by clusters of acidic residues at the protein surface, especially at the interface between subunits. Can bind around 60 Ca(2+) ions. Regulates the release of lumenal Ca(2+) via the calcium release channel RYR2; this plays an important role in triggering muscle contraction. Plays a role in excitation-contraction coupling in the heart and in regulating the rate of heart beats. In Oryctolagus cuniculus (Rabbit), this protein is Calsequestrin-2 (CASQ2).